The following is a 117-amino-acid chain: Big defensin (117 aa).

A signal peptide spans 1–23 (MKGNIGIAVFYMLLLLLPTDSIG). Residues 26–36 (MEEEQEKLFRQ) constitute a propeptide that is removed on maturation. 3 disulfides stabilise this stretch: Cys-83/Cys-113, Cys-90/Cys-108, and Cys-94/Cys-114.

This sequence belongs to the big defensin family. As to quaternary structure, interacts with intracellular coagulation inhibitor 1/LICI-1. In terms of tissue distribution, expressed in all tissues examined, including hemocytes, heart, hepatopancreas, stomach, intestine and skeletal muscle.

The protein localises to the secreted. Its function is as follows. Significantly inhibits the growth of Gram-negative and Gram-positive bacteria and fungi in vitro. The protein is Big defensin of Tachypleus tridentatus (Japanese horseshoe crab).